Consider the following 362-residue polypeptide: Endopolygalacturonase II (362 aa).

Positions 1-21 (MHSFASLLAYGLVAGATFASA) are cleaved as a signal peptide. Positions 22-27 (SPIEAR) are excised as a propeptide. Residues Cys-30 and Cys-45 are joined by a disulfide bond. A PbH1 1 repeat occupies 156–186 (ANDITFTDVTINNADGDTQGGHNTDAFDVGN). The active-site Proton donor is the Asp-201. A disulfide bridge links Cys-203 with Cys-219. 4 PbH1 repeats span residues 209–229 (GENIWFTGGTCIGGHGLSIGS), 238–259 (VKNVTIEHSTVSNSENAVRIKT), 267–289 (VSEITYSNIVMSGISDYGVVIQQ), and 301–322 (TNGVTIQDVKLESVTGSVDSGA). Residue His-223 is part of the active site. N-linked (GlcNAc...) (high mannose) asparagine glycosylation is present at Asn-240. 2 cysteine pairs are disulfide-bonded: Cys-329–Cys-334 and Cys-353–Cys-362.

This sequence belongs to the glycosyl hydrolase 28 family.

It localises to the secreted. The catalysed reaction is (1,4-alpha-D-galacturonosyl)n+m + H2O = (1,4-alpha-D-galacturonosyl)n + (1,4-alpha-D-galacturonosyl)m.. In terms of biological role, involved in maceration and soft-rotting of plant tissue. Hydrolyzes the 1,4-alpha glycosidic bonds of de-esterified pectate in the smooth region of the plant cell wall. The chain is Endopolygalacturonase II (pgaII) from Aspergillus niger (strain ATCC 1015 / CBS 113.46 / FGSC A1144 / LSHB Ac4 / NCTC 3858a / NRRL 328 / USDA 3528.7).